The sequence spans 55 residues: Preprotein translocase subunit SecG (55 aa).

Topologically, residues 1-29 (MAKKSGSGLQSSAGLMRYYEADKNAVQVQ) are cytoplasmic. A helical transmembrane segment spans residues 30–51 (PKVVLIVGAIVGIAVLFLSAVN). Residues 52-55 (GFWP) are Extracellular-facing.

The protein belongs to the SEC61-beta family. In terms of assembly, component of the protein translocase complex. Heterotrimer consisting of alpha (SecY), beta (SecG) and gamma (SecE) subunits. Can form oligomers of the heterotrimer.

It localises to the cell membrane. In terms of biological role, involved in protein export. The function of the beta subunit is unknown, but it may be involved in stabilization of the trimeric complex. In Methanosarcina barkeri (strain Fusaro / DSM 804), this protein is Preprotein translocase subunit SecG.